The following is a 247-amino-acid chain: Ribosomal RNA small subunit methyltransferase G (247 aa).

S-adenosyl-L-methionine-binding positions include glycine 84, phenylalanine 89, 136–137, and arginine 155; that span reads AE.

Belongs to the methyltransferase superfamily. RNA methyltransferase RsmG family.

The protein resides in the cytoplasm. In terms of biological role, specifically methylates the N7 position of a guanine in 16S rRNA. In Prochlorococcus marinus (strain MIT 9303), this protein is Ribosomal RNA small subunit methyltransferase G.